Consider the following 160-residue polypeptide: Protein TCP17 (160 aa).

It localises to the cytoplasm. The protein is Protein TCP17 of Trypanosoma cruzi.